Here is a 117-residue protein sequence, read N- to C-terminus: DNA-directed RNA polymerase subunit omega (117 aa).

Belongs to the RNA polymerase subunit omega family. As to quaternary structure, the RNAP catalytic core consists of 2 alpha, 1 beta, 1 beta' and 1 omega subunit. When a sigma factor is associated with the core the holoenzyme is formed, which can initiate transcription.

The enzyme catalyses RNA(n) + a ribonucleoside 5'-triphosphate = RNA(n+1) + diphosphate. In terms of biological role, promotes RNA polymerase assembly. Latches the N- and C-terminal regions of the beta' subunit thereby facilitating its interaction with the beta and alpha subunits. This Roseobacter denitrificans (strain ATCC 33942 / OCh 114) (Erythrobacter sp. (strain OCh 114)) protein is DNA-directed RNA polymerase subunit omega.